Consider the following 356-residue polypeptide: Methionine import ATP-binding protein MetN (356 aa).

Residues 7–250 form the ABC transporter domain; the sequence is IKLDNIDVTF…PRESLTQDFI (244 aa). An ATP-binding site is contributed by 43 to 50; sequence GYSGAGKS.

The protein belongs to the ABC transporter superfamily. Methionine importer (TC 3.A.1.24) family. The complex is composed of two ATP-binding proteins (MetN), two transmembrane proteins (MetI) and a solute-binding protein (MetQ).

It is found in the cell membrane. The enzyme catalyses L-methionine(out) + ATP + H2O = L-methionine(in) + ADP + phosphate + H(+). It carries out the reaction D-methionine(out) + ATP + H2O = D-methionine(in) + ADP + phosphate + H(+). Part of the ABC transporter complex MetNIQ involved in methionine import. Responsible for energy coupling to the transport system. This Streptococcus agalactiae serotype III (strain NEM316) protein is Methionine import ATP-binding protein MetN.